Consider the following 132-residue polypeptide: Phosphomevalonate dehydratase small subunit (132 aa).

The active-site Proton acceptor is the S61.

It belongs to the AcnX type II small subunit family. Heterodimer composed of a large subunit (PMDh-L) and a small subunit (PMDh-S).

It carries out the reaction (R)-5-phosphomevalonate = (2E)-3-methyl-5-phosphooxypent-2-enoate + H2O. Its pathway is isoprenoid biosynthesis; isopentenyl diphosphate biosynthesis via mevalonate pathway. Component of a hydro-lyase that catalyzes the dehydration of mevalonate 5-phosphate (MVA5P) to form trans-anhydromevalonate 5-phosphate (tAHMP). Involved in the archaeal mevalonate (MVA) pathway, which provides fundamental precursors for isoprenoid biosynthesis, such as isopentenyl diphosphate (IPP) and dimethylallyl diphosphate (DMAPP). The protein is Phosphomevalonate dehydratase small subunit of Archaeoglobus fulgidus (strain ATCC 49558 / DSM 4304 / JCM 9628 / NBRC 100126 / VC-16).